Reading from the N-terminus, the 332-residue chain is MPEGPLVRKFHHLVSPFVGQQVVKTGGSSKKLQPASLQCLWLQDTQVNGKKLFLRFDPDEEMGPPGSSPPPEPPQKEAQKEGAADPKQVGEPSGQKTPDGSSQSAELVPQGEDDSEYLERDAPAGDAGRWLRVSFGLFGSVWVNEFSRAKQANKRGDWRDPSPRLVLHCGGGGFLAFYNCQMSWSSSPVVTPTCDILSEKFHRGQALEALGQAQPVCYTLLDQRYFSGLGNIIKNEALYRAGIHPLSLGSVLSASRREVLVDHVVEFSTAWLQGKFQGRPQRTQVYQREQCPAGHQVMKEAFGPQDGLQRLTWWCPQCQPQLSEEPEQRQFS.

Pro-2 acts as the Schiff-base intermediate with DNA in catalysis. The active-site Proton donor is the Glu-3. The active-site Proton donor; for beta-elimination activity is the Lys-50. Lys-50 carries the N6-acetyllysine modification. The interval 56–121 is disordered; that stretch reads FDPDEEMGPP…EDDSEYLERD (66 aa). Ser-68 is subject to Phosphoserine. Residues 74-84 show a composition bias toward basic and acidic residues; sequence PQKEAQKEGAA. Residues 94 to 105 show a composition bias toward polar residues; that stretch reads GQKTPDGSSQSA. Lys-154 carries the post-translational modification N6-acetyllysine. DNA is bound at residue Asn-231. An FPG-type zinc finger spans residues 284–320; it reads QVYQREQCPAGHQVMKEAFGPQDGLQRLTWWCPQCQP. Arg-310 acts as the Proton donor; for delta-elimination activity in catalysis.

The protein belongs to the FPG family. As to quaternary structure, binds EP300.

Its subcellular location is the nucleus. The catalysed reaction is 2'-deoxyribonucleotide-(2'-deoxyribose 5'-phosphate)-2'-deoxyribonucleotide-DNA = a 3'-end 2'-deoxyribonucleotide-(2,3-dehydro-2,3-deoxyribose 5'-phosphate)-DNA + a 5'-end 5'-phospho-2'-deoxyribonucleoside-DNA + H(+). Its activity is regulated as follows. Acetylation of Lys-50 leads to loss of DNA nicking activity. Its function is as follows. Involved in base excision repair of DNA damaged by oxidation or by mutagenic agents. Has DNA glycosylase activity towards 5-hydroxyuracil and other oxidized derivatives of cytosine with a preference for mismatched double-stranded DNA (DNA bubbles). Has low or no DNA glycosylase activity towards thymine glycol, 2-hydroxyadenine, hypoxanthine and 8-oxoguanine. Has AP (apurinic/apyrimidinic) lyase activity and introduces nicks in the DNA strand. Cleaves the DNA backbone by beta-delta elimination to generate a single-strand break at the site of the removed base with both 3'- and 5'-phosphates. This is Endonuclease 8-like 2 (NEIL2) from Pongo abelii (Sumatran orangutan).